A 281-amino-acid polypeptide reads, in one-letter code: Diaminopimelate epimerase (281 aa).

Positions 13 and 66 each coordinate substrate. Catalysis depends on C75, which acts as the Proton donor. Residues G76 to N77, N164, N197, and E215 to R216 each bind substrate. The active-site Proton acceptor is C224. A substrate-binding site is contributed by G225–T226.

This sequence belongs to the diaminopimelate epimerase family. In terms of assembly, homodimer.

The protein localises to the cytoplasm. The enzyme catalyses (2S,6S)-2,6-diaminopimelate = meso-2,6-diaminopimelate. Its pathway is amino-acid biosynthesis; L-lysine biosynthesis via DAP pathway; DL-2,6-diaminopimelate from LL-2,6-diaminopimelate: step 1/1. Its function is as follows. Catalyzes the stereoinversion of LL-2,6-diaminopimelate (L,L-DAP) to meso-diaminopimelate (meso-DAP), a precursor of L-lysine and an essential component of the bacterial peptidoglycan. This is Diaminopimelate epimerase from Picosynechococcus sp. (strain ATCC 27264 / PCC 7002 / PR-6) (Agmenellum quadruplicatum).